A 728-amino-acid chain; its full sequence is 1,4-alpha-glucan branching enzyme GlgB (728 aa).

The Nucleophile role is filled by aspartate 409. Glutamate 462 functions as the Proton donor in the catalytic mechanism.

This sequence belongs to the glycosyl hydrolase 13 family. GlgB subfamily. As to quaternary structure, monomer.

The enzyme catalyses Transfers a segment of a (1-&gt;4)-alpha-D-glucan chain to a primary hydroxy group in a similar glucan chain.. The protein operates within glycan biosynthesis; glycogen biosynthesis. Its function is as follows. Catalyzes the formation of the alpha-1,6-glucosidic linkages in glycogen by scission of a 1,4-alpha-linked oligosaccharide from growing alpha-1,4-glucan chains and the subsequent attachment of the oligosaccharide to the alpha-1,6 position. The chain is 1,4-alpha-glucan branching enzyme GlgB from Cereibacter sphaeroides (strain ATCC 17023 / DSM 158 / JCM 6121 / CCUG 31486 / LMG 2827 / NBRC 12203 / NCIMB 8253 / ATH 2.4.1.) (Rhodobacter sphaeroides).